We begin with the raw amino-acid sequence, 360 residues long: Peptide chain release factor 1 (360 aa).

Q235 is subject to N5-methylglutamine. The span at 285 to 295 shows a compositional bias: basic and acidic residues; sequence RQAAEQTDMRR. The tract at residues 285–309 is disordered; the sequence is RQAAEQTDMRRNLLGSGDRSDKIRT.

It belongs to the prokaryotic/mitochondrial release factor family. Post-translationally, methylated by PrmC. Methylation increases the termination efficiency of RF1.

It localises to the cytoplasm. Functionally, peptide chain release factor 1 directs the termination of translation in response to the peptide chain termination codons UAG and UAA. The polypeptide is Peptide chain release factor 1 (Haemophilus influenzae (strain 86-028NP)).